Reading from the N-terminus, the 80-residue chain is MSCCGGNCGCGSGCKCGNGCGGCKMYPDLGFSGESTTTETFVFGVAPAMKNQYEASGEGVAENDACKCGSDCKCDPCTCK.

The protein belongs to the metallothionein superfamily. Type 15 family.

Its function is as follows. Metallothioneins have a high content of cysteine residues that bind various heavy metals. The protein is Metallothionein-like protein type 2 of Brassica campestris (Field mustard).